A 706-amino-acid chain; its full sequence is Protein psiG (706 aa).

A signal peptide spans 1–23; the sequence is MKIILTLLIILFSLNKNLNFVSS. Over 24 to 644 the chain is Extracellular; it reads EVTKSRICSI…FVCKPAAIIS (621 aa). Asparagine 95, asparagine 107, asparagine 212, asparagine 296, asparagine 429, asparagine 521, asparagine 532, and asparagine 616 each carry an N-linked (GlcNAc...) asparagine glycan. Positions 109-253 constitute a PA14 domain; sequence TLDKSSNIYS…SDYCGVCQGD (145 aa). A helical transmembrane segment spans residues 645-665; sequence TSVIVGVSVAAAVVAIAIVVA. Topologically, residues 666-706 are cytoplasmic; that stretch reads SKKGYDAWAASNNNSLASLTSNPLYENPTGNGDNPMYQPNS. A disordered region spans residues 687-706; the sequence is NPLYENPTGNGDNPMYQPNS. Positions 693–706 are enriched in polar residues; the sequence is PTGNGDNPMYQPNS.

It belongs to the prespore-cell-inducing factor family.

The protein resides in the membrane. This chain is Protein psiG (psiG-1), found in Dictyostelium discoideum (Social amoeba).